The chain runs to 492 residues: ATP synthase subunit beta, chloroplastic (492 aa).

170-177 (GGAGVGKT) lines the ATP pocket.

It belongs to the ATPase alpha/beta chains family. F-type ATPases have 2 components, CF(1) - the catalytic core - and CF(0) - the membrane proton channel. CF(1) has five subunits: alpha(3), beta(3), gamma(1), delta(1), epsilon(1). CF(0) has four main subunits: a(1), b(1), b'(1) and c(9-12).

It is found in the plastid. It localises to the chloroplast thylakoid membrane. The catalysed reaction is ATP + H2O + 4 H(+)(in) = ADP + phosphate + 5 H(+)(out). Its function is as follows. Produces ATP from ADP in the presence of a proton gradient across the membrane. The catalytic sites are hosted primarily by the beta subunits. The polypeptide is ATP synthase subunit beta, chloroplastic (Psilotum nudum (Whisk fern)).